A 165-amino-acid chain; its full sequence is Nascent polypeptide-associated complex subunit beta (165 aa).

Disordered regions lie at residues 1–34 and 133–165; these read MDQA…TSGA and QNMQ…KSVD. Basic residues predominate over residues 20–30; it reads TPRRKVKKVHK. The 78-residue stretch at 33–110 folds into the NAC-A/B domain; the sequence is GADDKKLQAT…GEEKELTELV (78 aa). Positions 145–158 are enriched in acidic residues; sequence DDDEDDIPDLVEGE.

Belongs to the NAC-beta family. Part of the nascent polypeptide-associated complex (NAC), consisting of egd2 and egd1. NAC associates with ribosomes via egd1.

The protein localises to the cytoplasm. Its subcellular location is the nucleus. Functionally, component of the nascent polypeptide-associated complex (NAC), a dynamic component of the ribosomal exit tunnel, protecting the emerging polypeptides from interaction with other cytoplasmic proteins to ensure appropriate nascent protein targeting. The NAC complex also promotes mitochondrial protein import by enhancing productive ribosome interactions with the outer mitochondrial membrane and blocks the inappropriate interaction of ribosomes translating non-secretory nascent polypeptides with translocation sites in the membrane of the endoplasmic reticulum. EGD1 may act as a transcription factor that exert a negative effect on the expression of several genes that are transcribed by RNA polymerase II. The sequence is that of Nascent polypeptide-associated complex subunit beta (egd1) from Emericella nidulans (strain FGSC A4 / ATCC 38163 / CBS 112.46 / NRRL 194 / M139) (Aspergillus nidulans).